We begin with the raw amino-acid sequence, 226 residues long: Pre-mRNA-splicing factor SPF27 (226 aa).

Position 2 is an N-acetylalanine (A2). Position 94 is a phosphoserine (S94). A coiled-coil region spans residues 139 to 223; it reads YNENLVHMIE…HGEANKENIR (85 aa).

The protein belongs to the SPF27 family. In terms of assembly, component of the pre-catalytic and catalytic spliceosome complexes. Component of the postcatalytic spliceosome P complex. Component of the PRP19-CDC5L splicing complex composed of a core complex comprising a homotetramer of PRPF19, CDC5L, PLRG1 and BCAS2, and at least three less stably associated proteins CTNNBL1, CWC15 and HSPA8. Interacts directly in the complex with PRPF19, CDC5L and PLRG1.

It localises to the nucleus. The protein resides in the nucleolus. In terms of biological role, required for pre-mRNA splicing as component of the activated spliceosome. Component of the PRP19-CDC5L complex that forms an integral part of the spliceosome and is required for activating pre-mRNA splicing. May have a scaffolding role in the spliceosome assembly as it contacts all other components of the core complex. The PRP19-CDC5L complex may also play a role in the response to DNA damage (DDR). The sequence is that of Pre-mRNA-splicing factor SPF27 (BCAS2) from Pongo abelii (Sumatran orangutan).